We begin with the raw amino-acid sequence, 1048 residues long: MYLAAVSAGRRRPGGDGGGGGGGWHLAAAGWLLLLALLLGQPGTRALVCLPCDESKCEEPKSCPGIIVLGICGCCFMCARQRNESCGGVYGLHGACDRGLRCVIRPPLNGDSITEYEVGVCEDENWDDDQLLGFEPCNENLITGCNIINGKCDCDTIRTCNNPFEFPSRDTCLSALKRIEEEKPDCSKARCEVQFSPRCPEDSILIEGYAPPGECCPLPSRCVCNPAGCLRKVCQPGYLNILVSKASGKPGECCDLYECKPVFSVDCSTVECPPVQQVVCPLDSYETQVRLTADGCCTLPTRCECLSGLCGFPMCEAGSVPQIVSRGDGTPGKCCDVFECVNEVKPTCIFNSMEYYDGDMFRMDACRFCRCQGGVSICFSAQCGELHCDRYYVPEGECCPVCEDPVYPVNNPAGCYANGQIQAHGDRWREDDCTFCQCINGNPHCVATACGQSCLNPVKVPGECCPVCEEPTYITIGPPTCELLVNCTLTEKDCIYSFKLDQNGCRICQCKTREELCTGLISGCSLDCSFGFQTDAHNCEICQCRPRPKKCKPIVCDKYCPFGYLKNKHGCEICRCKKCPEMPCGKICPMGFQQNSHGCVICKCREATASLMPPVKTGSCLSMDGRRHENEESWHDGCRECYCHNGREMCALITCPVPNCGNPTIHPGQCCPSCPDEIIVQKPELTSPSICHAPGGEYFVEGETWNIDSCTQCTCHSGRVLCETEVCPPLLCQNPTRTQDSCCPQCPDEPLQPSLSSNVSMPSYCKNDEGDIFLTAESWKPNVCTSCICMDGVIRCYSESCPPVSCERPVLRKGQCCPYCIEDTVPKKVVCHFNGKTYADEERWDIDSCTHCYCLQGQTLCSTVSCPPLPCAEPINVEGSCCPMCPEMYVPEPTNIPIEKTNHRGDVELEVPNWSTPSENDIIHIHRDMNHLQGEYRSGNGPHPSEDASVSSVALVTVPITIALLVIIVFLLINQKKQWIPVSCYKAPTKPSCLNNQLVYVDCKKGTMVQVDSSQRMLRIADPDSRYSGFYSMQKQNNLQADNFYQTV.

The signal sequence occupies residues 1-46 (MYLAAVSAGRRRPGGDGGGGGGGWHLAAAGWLLLLALLLGQPGTRA). The IGFBP N-terminal domain maps to 47-124 (LVCLPCDESK…EYEVGVCEDE (78 aa)). The Extracellular segment spans residues 47-952 (LVCLPCDESK…HPSEDASVSS (906 aa)). 4 disulfide bridges follow: cysteine 49-cysteine 72, cysteine 52-cysteine 74, cysteine 57-cysteine 75, and cysteine 63-cysteine 78. N-linked (GlcNAc...) asparagine glycosylation occurs at asparagine 83. Intrachain disulfides connect cysteine 86–cysteine 102 and cysteine 96–cysteine 121. Residues 326–328 (RGD) carry the Cell attachment site motif. VWFC domains follow at residues 346-403 (PTCI…PVCE) and 413-469 (AGCY…PVCE). Antistasin-like domains are found at residues 481-510 (CELL…ICQC), 517-544 (CTGL…ICQC), 551-576 (CKPI…ICRC), and 579-604 (CPEM…ICKC). A glycan (N-linked (GlcNAc...) asparagine) is linked at asparagine 486. VWFC domains are found at residues 618 to 675 (GSCL…PSCP) and 689 to 747 (SICH…PQCP). Asparagine 758 is a glycosylation site (N-linked (GlcNAc...) asparagine). 2 consecutive VWFC domains span residues 763-821 (SYCK…PYCI) and 829-886 (VVCH…PMCP). Residues 904–906 (RGD) carry the Cell attachment site motif. Asparagine 913 carries N-linked (GlcNAc...) asparagine glycosylation. A helical membrane pass occupies residues 953-973 (VALVTVPITIALLVIIVFLLI). Residues 974–1048 (NQKKQWIPVS…LQADNFYQTV (75 aa)) lie on the Cytoplasmic side of the membrane.

It is found in the membrane. Functionally, may play a role in CNS development by interacting with growth factors implicated in motor neuron differentiation and survival. In Gallus gallus (Chicken), this protein is Cysteine-rich motor neuron 1 protein (CRIM1).